The sequence spans 128 residues: Holo-[acyl-carrier-protein] synthase (128 aa).

Mg(2+)-binding residues include Asp8 and Glu57.

The protein belongs to the P-Pant transferase superfamily. AcpS family. Mg(2+) serves as cofactor.

The protein localises to the cytoplasm. It catalyses the reaction apo-[ACP] + CoA = holo-[ACP] + adenosine 3',5'-bisphosphate + H(+). Its function is as follows. Transfers the 4'-phosphopantetheine moiety from coenzyme A to a Ser of acyl-carrier-protein. The protein is Holo-[acyl-carrier-protein] synthase of Syntrophus aciditrophicus (strain SB).